The sequence spans 382 residues: Chaperone protein DnaJ (382 aa).

One can recognise a J domain in the interval 5 to 70 (DYYEVLGVSR…DKKAAYDRYG (66 aa)). A CR-type zinc finger spans residues 141 to 219 (GVQKTINVPA…CHGAGRVEKE (79 aa)). Zn(2+)-binding residues include Cys-154, Cys-157, Cys-171, Cys-174, Cys-193, Cys-196, Cys-207, and Cys-210. 4 CXXCXGXG motif repeats span residues 154 to 161 (CDACKGTG), 171 to 178 (CPTCSGMG), 193 to 200 (CPTCNGMG), and 207 to 214 (CKVCHGAG).

Belongs to the DnaJ family. As to quaternary structure, homodimer. It depends on Zn(2+) as a cofactor.

It localises to the cytoplasm. Functionally, participates actively in the response to hyperosmotic and heat shock by preventing the aggregation of stress-denatured proteins and by disaggregating proteins, also in an autonomous, DnaK-independent fashion. Unfolded proteins bind initially to DnaJ; upon interaction with the DnaJ-bound protein, DnaK hydrolyzes its bound ATP, resulting in the formation of a stable complex. GrpE releases ADP from DnaK; ATP binding to DnaK triggers the release of the substrate protein, thus completing the reaction cycle. Several rounds of ATP-dependent interactions between DnaJ, DnaK and GrpE are required for fully efficient folding. Also involved, together with DnaK and GrpE, in the DNA replication of plasmids through activation of initiation proteins. This chain is Chaperone protein DnaJ, found in Cereibacter sphaeroides (strain ATCC 17023 / DSM 158 / JCM 6121 / CCUG 31486 / LMG 2827 / NBRC 12203 / NCIMB 8253 / ATH 2.4.1.) (Rhodobacter sphaeroides).